Consider the following 367-residue polypeptide: Probable outer membrane usher protein LpfC (367 aa).

Positions 1-30 (MSRKTVSRTFSSFSISVVAVAVASTFSAHA) are cleaved as a signal peptide.

This sequence belongs to the fimbrial export usher family.

It is found in the cell outer membrane. In terms of biological role, part of the lpfABCC'DE fimbrial operon. LP fimbriae may participate in the interaction with eukaryotic cells by assisting in microcolony formation. Could be involved in the export and assembly of the fimbrial subunits across the outer membrane. The protein is Probable outer membrane usher protein LpfC (lpfC) of Escherichia coli O157:H7.